We begin with the raw amino-acid sequence, 150 residues long: Large ribosomal subunit protein uL15 (150 aa).

It belongs to the universal ribosomal protein uL15 family. In terms of assembly, part of the 50S ribosomal subunit.

Binds to the 23S rRNA. The chain is Large ribosomal subunit protein uL15 from Anaplasma marginale (strain Florida).